We begin with the raw amino-acid sequence, 1136 residues long: DNA-directed RNA polymerase I subunit RPA2 (1136 aa).

Residues 1 to 24 (MDPGSRWRNLPSGPSLKHLTDPSY) are disordered. Residue arginine 180 coordinates RNA. Positions 194–208 (VRPKWKTRGPGYTHY) are loop B. The tract at residues 236–247 (LNFIYRKELFFL) is loop A. RNA is bound at residue aspartate 367. Fork loop stretches follow at residues 439–453 (LRSK…DSGL) and 474–489 (RGAD…VRRL). An RNA-binding site is contributed by lysine 890. Arginine 1020 and arginine 1036 together coordinate DNA. Serine 1051 bears the Phosphoserine mark. The Zn(2+) site is built by cysteine 1071, cysteine 1074, cysteine 1099, and cysteine 1102. The C4-type zinc finger occupies 1071–1102 (CVKCGSLLSPLLEKPPPSWSAMRNRKYNCTLC).

It belongs to the RNA polymerase beta chain family. Component of the RNA polymerase I (Pol I) complex consisting of 13 subunits: a ten-subunit catalytic core composed of POLR1A/RPA1, POLR1B/RPA2, POLR1C/RPAC1, POLR1D/RPAC2, POLR1H/RPA12, POLR2E/RPABC1, POLR2F/RPABC2, POLR2H/RPABC3, POLR2K/RPABC4 and POLR2L/RPABC5; a mobile stalk subunit POLR1F/RPA43 protruding from the core and additional subunits homologous to general transcription factors POLR1E/RPA49 and POLR1G/RPA34. Part of Pol I pre-initiation complex (PIC), in which Pol I core assembles with RRN3 and promoter-bound UTBF and SL1/TIF-IB complex.

It is found in the nucleus. Its subcellular location is the nucleolus. The protein resides in the chromosome. The catalysed reaction is RNA(n) + a ribonucleoside 5'-triphosphate = RNA(n+1) + diphosphate. Functionally, catalytic core component of RNA polymerase I (Pol I), a DNA-dependent RNA polymerase which synthesizes ribosomal RNA precursors using the four ribonucleoside triphosphates as substrates. Transcribes 47S pre-rRNAs from multicopy rRNA gene clusters, giving rise to 5.8S, 18S and 28S ribosomal RNAs. Pol I-mediated transcription cycle proceeds through transcription initiation, transcription elongation and transcription termination stages. During transcription initiation, Pol I pre-initiation complex (PIC) is recruited by the selectivity factor 1 (SL1/TIF-IB) complex bound to the core promoter that precedes an rDNA repeat unit. The PIC assembly bends the promoter favoring the formation of the transcription bubble and promoter escape. Once the polymerase has escaped from the promoter it enters the elongation phase during which RNA is actively polymerized, based on complementarity with the template DNA strand. Highly processive, assembles in structures referred to as 'Miller trees' where many elongating Pol I complexes queue and transcribe the same rDNA coding regions. At terminator sequences downstream of the rDNA gene, PTRF interacts with Pol I and halts Pol I transcription leading to the release of the RNA transcript and polymerase from the DNA. Forms Pol I active center together with the largest subunit POLR1A/RPA1. Appends one nucleotide at a time to the 3' end of the nascent RNA, with POLR1A/RPA1 contributing a Mg(2+)-coordinating DxDGD motif, and POLR1B/RPA2 providing lysine residues believed to facilitate Watson-Crick base pairing between the incoming nucleotide and the template base. Typically, Mg(2+) ions direct a 5' nucleoside triphosphate to form a phosphodiester bond with the 3' hydroxyl of the preceding nucleotide of the nascent RNA, with the elimination of pyrophosphate. Has proofreading activity: Pauses and backtracks to allow the cleavage of a missincorporated nucleotide via POLR1H/RPA12. High Pol I processivity is associated with decreased transcription fidelity. The sequence is that of DNA-directed RNA polymerase I subunit RPA2 (POLR1B) from Pongo abelii (Sumatran orangutan).